The chain runs to 376 residues: Arabinogalactan endo-beta-1,4-galactanase (376 aa).

Residues 1–17 (MKKKILAATAILLAAIA) form the signal peptide. Glu-161 functions as the Proton donor in the catalytic mechanism. Glu-270 (nucleophile) is an active-site residue. Ca(2+)-binding residues include Asp-281 and Asn-285.

This sequence belongs to the glycosyl hydrolase 53 family. It depends on Ca(2+) as a cofactor.

The catalysed reaction is The enzyme specifically hydrolyzes (1-&gt;4)-beta-D-galactosidic linkages in type I arabinogalactans.. The protein is Arabinogalactan endo-beta-1,4-galactanase (ganB) of Cellvibrio japonicus (strain Ueda107) (Pseudomonas fluorescens subsp. cellulosa).